The chain runs to 379 residues: MSLYSETPSAALLPSGFADLLPGEAEAEARGIASVMEAFSRHGYQRVRPPLLEFETSLLGGSGESLAPQTFRLMDPNSHRMMALRPDMTTQIARIASIRLQDAPRPLRLSYSGSCIVVGTPGREADRQISQAGIELIGPDSAQADAEVIALGAKALAELGIEGVSFDLSMPALALGLIEGVIPEADREPLLHALDRKDASAVAELGGPIAGMLAVMLRAAGPADRALDLLASLDYPKDVVGYFERLAASVAAIRERSPDLRLTIDPVDFRGWRYHTGLCVTVFSTSSREELGRGGRYLAGQEPACGLTLRPQALLRAAPVSASRPRCYVPVDLDAASLSGLHKAGYATVSALSHDEDAAAQARHLRCTHVWKDGAARPL.

The protein belongs to the class-II aminoacyl-tRNA synthetase family. HisZ subfamily. Heteromultimer composed of HisG and HisZ subunits.

Its subcellular location is the cytoplasm. It functions in the pathway amino-acid biosynthesis; L-histidine biosynthesis; L-histidine from 5-phospho-alpha-D-ribose 1-diphosphate: step 1/9. Functionally, required for the first step of histidine biosynthesis. May allow the feedback regulation of ATP phosphoribosyltransferase activity by histidine. The sequence is that of ATP phosphoribosyltransferase regulatory subunit from Gluconobacter oxydans (strain 621H) (Gluconobacter suboxydans).